The sequence spans 618 residues: Transcriptional regulator CPUR_05421 (618 aa).

The segment at residues C14–C41 is a DNA-binding region (zn(2)-C6 fungal-type). A disordered region spans residues T52–E87. Residues N59 to A81 show a composition bias toward polar residues.

It is found in the nucleus. Transcriptional regulator; part of the ergochrome gene cluster responsible for the typical purple-black color of the ergot sclerotia. The ergochrome gene cluster produces several ergot pigments including the yellow ergochrome secalonic acid and its derivatives, as well as the red anthraquinones endocrocin and clavorubin. This chain is Transcriptional regulator CPUR_05421, found in Claviceps purpurea (strain 20.1) (Ergot fungus).